Consider the following 78-residue polypeptide: Alpha-amylase inhibitor Haim-1 (78 aa).

Cystine bridges form between cysteine 11–cysteine 27 and cysteine 45–cysteine 72.

In terms of biological role, inhibits mammalian alpha-amylases specifically but has no action on plant and microbial alpha-amylases. This chain is Alpha-amylase inhibitor Haim-1, found in Streptomyces griseosporeus.